We begin with the raw amino-acid sequence, 503 residues long: UDP-N-acetylmuramate--L-alanine ligase (503 aa).

120 to 126 (GTHGKTS) is an ATP binding site.

The protein belongs to the MurCDEF family.

It localises to the cytoplasm. The enzyme catalyses UDP-N-acetyl-alpha-D-muramate + L-alanine + ATP = UDP-N-acetyl-alpha-D-muramoyl-L-alanine + ADP + phosphate + H(+). The protein operates within cell wall biogenesis; peptidoglycan biosynthesis. In terms of biological role, cell wall formation. This is UDP-N-acetylmuramate--L-alanine ligase from Rhodococcus jostii (strain RHA1).